The primary structure comprises 307 residues: Elongation factor Ts (307 aa).

Residues 80-83 form an involved in Mg(2+) ion dislocation from EF-Tu region; that stretch reads TDFV.

Belongs to the EF-Ts family.

Its subcellular location is the cytoplasm. Associates with the EF-Tu.GDP complex and induces the exchange of GDP to GTP. It remains bound to the aminoacyl-tRNA.EF-Tu.GTP complex up to the GTP hydrolysis stage on the ribosome. In Variovorax paradoxus (strain S110), this protein is Elongation factor Ts.